The primary structure comprises 139 residues: Large ribosomal subunit protein uL16 (139 aa).

The span at 1-20 (MLIPRRVKHRKQHHPKRRGQ) shows a compositional bias: basic residues. The interval 1 to 25 (MLIPRRVKHRKQHHPKRRGQAKGGT) is disordered.

The protein belongs to the universal ribosomal protein uL16 family. As to quaternary structure, part of the 50S ribosomal subunit.

Binds 23S rRNA and is also seen to make contacts with the A and possibly P site tRNAs. This is Large ribosomal subunit protein uL16 from Streptomyces avermitilis (strain ATCC 31267 / DSM 46492 / JCM 5070 / NBRC 14893 / NCIMB 12804 / NRRL 8165 / MA-4680).